Here is a 23-residue protein sequence, read N- to C-terminus: Clavanin-B (23 aa).

At F23 the chain carries Phenylalanine amide.

The protein resides in the secreted. Has antimicrobial activity. This chain is Clavanin-B, found in Styela clava (Sea squirt).